The sequence spans 60 residues: UPF0434 protein CKO_02153 (60 aa).

This sequence belongs to the UPF0434 family.

The sequence is that of UPF0434 protein CKO_02153 from Citrobacter koseri (strain ATCC BAA-895 / CDC 4225-83 / SGSC4696).